Here is a 100-residue protein sequence, read N- to C-terminus: Aspartyl/glutamyl-tRNA(Asn/Gln) amidotransferase subunit C (100 aa).

This sequence belongs to the GatC family. In terms of assembly, heterotrimer of A, B and C subunits.

The catalysed reaction is L-glutamyl-tRNA(Gln) + L-glutamine + ATP + H2O = L-glutaminyl-tRNA(Gln) + L-glutamate + ADP + phosphate + H(+). The enzyme catalyses L-aspartyl-tRNA(Asn) + L-glutamine + ATP + H2O = L-asparaginyl-tRNA(Asn) + L-glutamate + ADP + phosphate + 2 H(+). Functionally, allows the formation of correctly charged Asn-tRNA(Asn) or Gln-tRNA(Gln) through the transamidation of misacylated Asp-tRNA(Asn) or Glu-tRNA(Gln) in organisms which lack either or both of asparaginyl-tRNA or glutaminyl-tRNA synthetases. The reaction takes place in the presence of glutamine and ATP through an activated phospho-Asp-tRNA(Asn) or phospho-Glu-tRNA(Gln). The chain is Aspartyl/glutamyl-tRNA(Asn/Gln) amidotransferase subunit C from Herminiimonas arsenicoxydans.